Reading from the N-terminus, the 99-residue chain is Integration host factor subunit alpha (99 aa).

The interval Phe49–Ile71 is disordered.

The protein belongs to the bacterial histone-like protein family. Heterodimer of an alpha and a beta chain.

Functionally, this protein is one of the two subunits of integration host factor, a specific DNA-binding protein that functions in genetic recombination as well as in transcriptional and translational control. This Shewanella denitrificans (strain OS217 / ATCC BAA-1090 / DSM 15013) protein is Integration host factor subunit alpha.